The sequence spans 402 residues: Propionate kinase (402 aa).

Residues asparagine 11 and lysine 18 each contribute to the ATP site. Asparagine 11 serves as a coordination point for Mg(2+). Substrate is bound at residue arginine 86. Aspartate 143 serves as the catalytic Proton donor/acceptor. ATP contacts are provided by residues histidine 175, 203 to 207 (HLGNG), 278 to 280 (DLR), and 326 to 330 (GIGEN).

This sequence belongs to the acetokinase family. TdcD subfamily. As to quaternary structure, homodimer. It depends on Mg(2+) as a cofactor.

It catalyses the reaction propanoate + ATP = propanoyl phosphate + ADP. The protein operates within amino-acid degradation; L-threonine degradation via propanoate pathway; propanoate from L-threonine: step 4/4. In terms of biological role, catalyzes the conversion of propionyl phosphate and ADP to propionate and ATP. The chain is Propionate kinase from Escherichia coli O157:H7.